Consider the following 72-residue polypeptide: uncharacterized protein (72 aa).

The segment at 51–72 is disordered; it reads AKGGRQKGEVVGVDDQCKEHKE.

It belongs to the YiiE family.

This is an uncharacterized protein from Escherichia coli O157:H7.